We begin with the raw amino-acid sequence, 405 residues long: MEEERENTNSIYIVSELLEEIFLGLPLKSILKFKTVSKQWRSILESNLFVERRRTLQKNHPKILAAYNCDYCTRPGILPKSQFEGDEEIVYLHTDATQPSMTCDGLVCITEPGWFNVLNVSTGQLRRFLPGPDPGPQANWLLGFGRDKVTGKYKIVRMCFHDCYEFGILDIESGEWSKLMSPPHIMRVGSKSVCVNGSIYWLQISVSYIILALDLHQETFNGVYHLPATWVTQDTQLVNLEDRLAMAMTTKVGPEWILEIWSMDIEEKGWSKRYTWSKAYSISLAHRVVVSWPWQKRWFTPVSVSKQGNLVFYDNHKRLFKYYSGTDEIRCLSSNINVISSYVENLAPLPLKPSHTHHDLGNSNSKFSTSRCHLFPTRGSWISKVFRRNVLFTSLVVVGYIYLPL.

One can recognise an F-box domain in the interval 7 to 53 (NTNSIYIVSELLEEIFLGLPLKSILKFKTVSKQWRSILESNLFVERR). Kelch repeat units lie at residues 146–197 (RDKV…CVNG) and 356–400 (THHD…VVGY).

The polypeptide is F-box/kelch-repeat protein At2g43445 (Arabidopsis thaliana (Mouse-ear cress)).